Here is a 213-residue protein sequence, read N- to C-terminus: Putative cytochrome c-type biogenesis protein HI_1454 (213 aa).

6 helical membrane passes run 15–35, 46–66, 77–97, 118–138, 154–174, and 192–212; these read GLAS…FGIL, FLFI…FGFL, IIAG…FKIG, AFVL…PILA, ASMM…FSFF, and FKIG…TNNF.

It belongs to the DsbD family.

It localises to the cell membrane. Functionally, could be involved in cytochrome c synthesis. The chain is Putative cytochrome c-type biogenesis protein HI_1454 from Haemophilus influenzae (strain ATCC 51907 / DSM 11121 / KW20 / Rd).